The primary structure comprises 665 residues: MKKPFYITTPIYYPSGKLHIGSAYTTIACDVLARYKRLMGHEVFYLTGLDEHGQKIQTKAKEAGITPQTYVDNMAKDVKALWQLLDISYDKFIRTTDDYHEEVVAAVFEKLLAQDDIYLGEYSGWYSVSDEEFFTESQLKEVFRDEDGQVIGGIAPSGHEVEWVSEESYFLRLSKYADRLVAFFKERPDFIQPDGRMNEMVKNFIEPGLEDLAVSRTTFTWGVPVPSDPKHVVYVWIDALLNYATALGYGQANHANFDKFWNGTVFHMVGKDILRFHSIYWPILLMMLDLPMPDRLIAHGWFVMKDGKMSKSKGNVVYPEMLVERFGLDPLRYYLMRSLPVGSDGTFTPEDYVGRINYELANDLGNLLNRTVAMINKYFDGTVPAYVDNGTAFDADLSQVIDAQLADYHKHMEAVDYPRALEAVWTIIARTNKYIDETAPWVLAKEDGDKAQLASVMAHLAASLRVVAHVIQPFMMETSAAIMAQLGLAPVSDLSTLALADFPANTKVVAKGTPIFPRLDMEAEIDYIKAQMGDSSAISQEKEWVPEEVALKSEKDVITFETFDAVEIRVAEVKEVSKVEGSEKLLRFRVDAGDGQDRQILSGIAKCYPNEQELVGKKLQIVANLKPRKMMKKYISQGMILSAEHGDQLTVLTVDSSVPNGSIIG.

The short motif at 12–22 (YYPSGKLHIGS) is the 'HIGH' region element. The short motif at 308–312 (KMSKS) is the 'KMSKS' region element. Position 311 (Lys311) interacts with ATP. Residues 562 to 665 (TFDAVEIRVA…SSVPNGSIIG (104 aa)) enclose the tRNA-binding domain.

This sequence belongs to the class-I aminoacyl-tRNA synthetase family. MetG type 2B subfamily. Homodimer.

Its subcellular location is the cytoplasm. The enzyme catalyses tRNA(Met) + L-methionine + ATP = L-methionyl-tRNA(Met) + AMP + diphosphate. In terms of biological role, is required not only for elongation of protein synthesis but also for the initiation of all mRNA translation through initiator tRNA(fMet) aminoacylation. The polypeptide is Methionine--tRNA ligase (metG) (Streptococcus pyogenes serotype M3 (strain SSI-1)).